The sequence spans 128 residues: Sulfurtransferase TusD (128 aa).

Cysteine 78 functions as the Cysteine persulfide intermediate in the catalytic mechanism.

This sequence belongs to the DsrE/TusD family. As to quaternary structure, heterohexamer, formed by a dimer of trimers. The hexameric TusBCD complex contains 2 copies each of TusB, TusC and TusD. The TusBCD complex interacts with TusE.

The protein localises to the cytoplasm. Its function is as follows. Part of a sulfur-relay system required for 2-thiolation of 5-methylaminomethyl-2-thiouridine (mnm(5)s(2)U) at tRNA wobble positions. Accepts sulfur from TusA and transfers it in turn to TusE. This is Sulfurtransferase TusD from Escherichia coli O139:H28 (strain E24377A / ETEC).